A 133-amino-acid chain; its full sequence is Small heat shock protein ibp (133 aa).

Positions 11–126 constitute a sHSP domain; sequence EQPLSENPNY…KPKKISINEE (116 aa).

It belongs to the small heat shock protein (HSP20) family.

This is Small heat shock protein ibp (ibp) from Wigglesworthia glossinidia brevipalpis.